The sequence spans 248 residues: Triosephosphate isomerase (248 aa).

Residue 9–11 participates in substrate binding; sequence NWK. His-94 (electrophile) is an active-site residue. Glu-166 functions as the Proton acceptor in the catalytic mechanism. Residues Gly-172, Ser-212, and 233–234 each bind substrate; that span reads GG.

Belongs to the triosephosphate isomerase family. Homodimer.

It is found in the cytoplasm. It carries out the reaction D-glyceraldehyde 3-phosphate = dihydroxyacetone phosphate. Its pathway is carbohydrate biosynthesis; gluconeogenesis. It participates in carbohydrate degradation; glycolysis; D-glyceraldehyde 3-phosphate from glycerone phosphate: step 1/1. Its function is as follows. Involved in the gluconeogenesis. Catalyzes stereospecifically the conversion of dihydroxyacetone phosphate (DHAP) to D-glyceraldehyde-3-phosphate (G3P). The protein is Triosephosphate isomerase of Clostridium acetobutylicum (strain ATCC 824 / DSM 792 / JCM 1419 / IAM 19013 / LMG 5710 / NBRC 13948 / NRRL B-527 / VKM B-1787 / 2291 / W).